Consider the following 124-residue polypeptide: Urease subunit beta (124 aa).

The protein belongs to the urease beta subunit family. As to quaternary structure, heterotrimer of UreA (gamma), UreB (beta) and UreC (alpha) subunits. Three heterotrimers associate to form the active enzyme.

It is found in the cytoplasm. The enzyme catalyses urea + 2 H2O + H(+) = hydrogencarbonate + 2 NH4(+). It functions in the pathway nitrogen metabolism; urea degradation; CO(2) and NH(3) from urea (urease route): step 1/1. The polypeptide is Urease subunit beta (Halalkalibacterium halodurans (strain ATCC BAA-125 / DSM 18197 / FERM 7344 / JCM 9153 / C-125) (Bacillus halodurans)).